An 886-amino-acid chain; its full sequence is Desmocollin-1 (886 aa).

A signal peptide spans 1-29 (MAVACAAPGSTFSKQLLFFLLVLVLFCDA). Positions 30 to 134 (CQKVSLHVPS…KEPVHNRSKR (105 aa)) are excised as a propeptide. Residues N130 and N165 are each glycosylated (N-linked (GlcNAc...) asparagine). Cadherin domains are found at residues 135–242 (RWAP…APYF), 243–354 (ETKL…SPYF), 355–471 (TQTS…GPEC), 472–575 (QPPV…DHPP), and 576–682 (QIDK…EERD). The Extracellular portion of the chain corresponds to 135–691 (RWAPIPCSLM…DAKPNIILGK (557 aa)). T385 is modified (phosphothreonine). N546 carries N-linked (GlcNAc...) (high mannose) asparagine glycosylation. N613 carries an N-linked (GlcNAc...) asparagine glycan. The chain crosses the membrane as a helical span at residues 692–714 (WAILAMVLGSALLLCILFTCFCV). Residues 715-886 (TTTKRTVKKC…RTLAKTCVKK (172 aa)) lie on the Cytoplasmic side of the membrane.

As to quaternary structure, binds to JUP/plakoglobin. In terms of tissue distribution, expressed in the epidermis and inner root sheaths of hair follicles (at protein level).

It is found in the cell membrane. The protein localises to the cell junction. The protein resides in the desmosome. In terms of biological role, a component of desmosome cell-cell junctions which are required for positive regulation of cellular adhesion. Required for desmosome adhesion strength between the granular layers of the epidermis, as a result moderates epidermal proliferation and differentiation. Is therefore required to maintain postnatal epidermal barrier function and normal hair follicle morphology into adulthood. This chain is Desmocollin-1 (Dsc1), found in Mus musculus (Mouse).